A 184-amino-acid polypeptide reads, in one-letter code: dCTP deaminase (184 aa).

107 to 112 (KSTIAR) provides a ligand contact to dCTP. Residue Glu133 is the Proton donor/acceptor of the active site. Positions 152, 166, and 176 each coordinate dCTP.

The protein belongs to the dCTP deaminase family. In terms of assembly, homotrimer.

The enzyme catalyses dCTP + H2O + H(+) = dUTP + NH4(+). It functions in the pathway pyrimidine metabolism; dUMP biosynthesis; dUMP from dCTP (dUTP route): step 1/2. Functionally, catalyzes the deamination of dCTP to dUTP. The polypeptide is dCTP deaminase (Roseiflexus castenholzii (strain DSM 13941 / HLO8)).